The sequence spans 680 residues: Zinc finger protein 263 (680 aa).

A Glycyl lysine isopeptide (Lys-Gly) (interchain with G-Cter in SUMO2) cross-link involves residue Lys-19. The region spanning 43-125 is the SCAN box domain; sequence HLRFRRFRFQ…TLVERMQKEL (83 aa). The disordered stretch occupies residues 147–191; it reads LPLETAGESPSFKLEPMETERSPGPRLQELLDPSPQRDSQAVKER. Residue Lys-159 forms a Glycyl lysine isopeptide (Lys-Gly) (interchain with G-Cter in SUMO2) linkage. 2 positions are modified to phosphoserine: Ser-168 and Ser-180. Residues Lys-286, Lys-300, and Lys-376 each participate in a glycyl lysine isopeptide (Lys-Gly) (interchain with G-Cter in SUMO2) cross-link. C2H2-type zinc fingers lie at residues 378 to 400, 434 to 456, 462 to 484, 490 to 512, and 518 to 540; these read HLCA…QRIH, HKCL…QRTH, FQCN…QRTH, YKCP…QRIH, and YRCS…ERTH. Glycyl lysine isopeptide (Lys-Gly) (interchain with G-Cter in SUMO2) cross-links involve residues Lys-570 and Lys-579. 4 consecutive C2H2-type zinc fingers follow at residues 572 to 594, 600 to 622, 628 to 650, and 656 to 678; these read FECS…QRTH, YKCI…QRIH, YTCH…LRTH, and YKCS…QRTH.

This sequence belongs to the krueppel C2H2-type zinc-finger protein family. As to quaternary structure, interacts with a number of proteins involved in chromatin modification and transcriptional corepression including DNMT1, DNMT3A, HDAC2, PHF8, TRIM28/KAP1, SETDB1, EZH2, UHRF1, CBX3/HP1-gamma, and CBX5/HP1-alpha; recruits these proteins to the SIX3 promoter region, leading to SIX3 transcriptional repression. Interacts with MAPK3/ERK1 and MAPK1/ERK2. In terms of processing, ubiquitinated, leading to proteasomal degradation. Expressed in Purkinje cells in the brain (at protein level).

It localises to the nucleus. Functionally, transcription factor that binds to the consensus sequence 5'-TCCTCCC-3' and acts as a transcriptional repressor. Binds to the promoter region of SIX3 and recruits other proteins involved in chromatin modification and transcriptional corepression, resulting in methylation of the promoter and transcriptional repression. Acts as a transcriptional repressor of HS3ST1 and HS3ST3A1 via binding to gene promoter regions. This is Zinc finger protein 263 from Mus musculus (Mouse).